The primary structure comprises 177 residues: Novel acetylcholine receptor chaperone (177 aa).

Residues 1–5 (MASPR) are Cytoplasmic-facing. Residues 6 to 26 (TVTVVALSVALGLFFVFMGTI) form a helical membrane-spanning segment. The Lumenal portion of the chain corresponds to 27-61 (KLTPRLSKDAYSEMKRAYKSYVRALPLLKKMGINS). The segment at 43–54 (AYKSYVRALPLL) is interaction with NGFR. The helical transmembrane segment at 62 to 82 (ILLRKSIGALEVACGIVMTLV) threads the bilayer. Over 83–88 (PGRPKD) the chain is Cytoplasmic. A helical transmembrane segment spans residues 89 to 109 (VANFFLLLLVLAVLFFHQLVG). Over 110–114 (DPLKR) the chain is Lumenal. A helical membrane pass occupies residues 115-132 (YAHALVFGILLTCRLLIA). Topologically, residues 133 to 177 (RKPEDRSSEKKSSPPGNAGSDGNAGNTEEQPSLYEKAPQGKMKLS) are cytoplasmic. Residues 136-177 (EDRSSEKKSSPPGNAGSDGNAGNTEEQPSLYEKAPQGKMKLS) are disordered.

The protein belongs to the DoxX family. As to quaternary structure, may interact with NGFR. Interacts with RPN1, RPN2 and CANX.

The protein resides in the peroxisome membrane. The protein localises to the cytoplasmic vesicle. Its subcellular location is the endoplasmic reticulum membrane. In terms of biological role, molecular chaperone which mediates the proper assembly and functional expression of the nicotinic acetylcholine receptors (nAChRs) throughout the brain. Essential for the proper folding, assembly, function and surface trafficking of alpha-7 (CHRNA7), alpha-4-beta-2, alpha-3-beta-2 and alpha-3-beta-4 receptors. Stably associates with ribophorin-1 (RPN1) and ribophorin-2 (RPN2) (components of the oligosaccharyl transferase (OST) complex) and with calnexin (CANX), both of which are critical for NACHO-mediated effects on CHRNA7 assembly and function. Facilitates the proper folding and assembly of alpha-6-beta-2 and alpha-6-beta-2-beta-3 receptors and acts at early stages of the nAChRs subunit assembly. Promotes the expression of the alpha-4(2):beta-2(3) stoichiometric form over the alpha-4(3):beta-2(2) form. In Bos taurus (Bovine), this protein is Novel acetylcholine receptor chaperone (TMEM35A).